Consider the following 162-residue polypeptide: Caveolin-2 (162 aa).

Over 1–86 (MGLETEKADV…FEISKYVMYK (86 aa)) the chain is Cytoplasmic. At tyrosine 19 the chain carries Phosphotyrosine; by SRC. Phosphoserine is present on residues serine 20 and serine 23. Phosphotyrosine; by SRC is present on tyrosine 27. Serine 36 carries the post-translational modification Phosphoserine. Residues 87–107 (FLTVFLAIPLAFLAGILFATL) constitute an intramembrane region (helical). The Cytoplasmic portion of the chain corresponds to 108–162 (SCLHIWIIMPFVKTCLMVLPSVQTIWKSVTDAIIAPLCTSIGRSFSSVSLQLSQD).

The protein belongs to the caveolin family. In terms of assembly, monomer or homodimer. Interacts with CAV1; the interaction forms a stable heterooligomeric complex that is required for targeting to lipid rafts and for caveolae formation. Tyrosine phosphorylated forms do not form heterooligomers with the Tyr-19-phosphorylated form existing as a monomer or dimer, and the Tyr-27-form as a monomer only. Interacts (tyrosine phosphorylated form) with the SH2 domain-containing proteins, RASA1, NCK1 and SRC. Interacts (tyrosine phosphorylated form) with INSR, the interaction (Tyr-27-phosphorylated form) is increased on insulin stimulation. Interacts (Tyr-19 phosphorylated form) with MAPK1 (phosphorylated form); the interaction, promoted by insulin, leads to nuclear location and MAPK1 activation. Interacts with STAT3; the interaction is increased on insulin-induced tyrosine phosphorylation leading to STAT activation. In terms of processing, phosphorylated on serine and tyrosine residues. CAV1 promotes phosphorylation on Ser-23 which then targets the complex to the plasma membrane, lipid rafts and caveolae. Phosphorylation on Ser-36 appears to modulate mitosis in endothelial cells. Phosphorylation on both Tyr-19 and Tyr-27 is required for insulin-induced 'Ser-727' phosphorylation of STAT3 and its activation. Phosphorylation on Tyr-19 is required for insulin-induced phosphorylation of MAPK1 and DNA binding of STAT3. Tyrosine phosphorylation is induced by both EGF and insulin (By. similarity).

It localises to the nucleus. Its subcellular location is the cytoplasm. The protein resides in the golgi apparatus membrane. The protein localises to the cell membrane. It is found in the membrane. It localises to the caveola. Functionally, may act as a scaffolding protein within caveolar membranes. Interacts directly with G-protein alpha subunits and can functionally regulate their activity. Acts as an accessory protein in conjunction with CAV1 in targeting to lipid rafts and driving caveolae formation. The Ser-36 phosphorylated form has a role in modulating mitosis in endothelial cells. Positive regulator of cellular mitogenesis of the MAPK signaling pathway. Required for the insulin-stimulated nuclear translocation and activation of MAPK1 and STAT3, and the subsequent regulation of cell cycle progression. This is Caveolin-2 (CAV2) from Callithrix jacchus (White-tufted-ear marmoset).